Here is a 322-residue protein sequence, read N- to C-terminus: Hydroxypyruvate reductase (322 aa).

Residues 160–161 (RI), Asp180, 211–212 (CP), 238–240 (NSR), and Asp264 contribute to the NAD(+) site. Arg240 is an active-site residue. The active site involves Glu269. Residue His288 is the Proton donor of the active site.

It belongs to the D-isomer specific 2-hydroxyacid dehydrogenase family.

The catalysed reaction is (R)-glycerate + NAD(+) = 3-hydroxypyruvate + NADH + H(+). It participates in carbohydrate metabolism. Its function is as follows. Involved in catabolism of D-apiose. Catalyzes the reduction of 3-hydroxypyruvate to glycerate. In Blautia hydrogenotrophica (strain DSM 10507 / JCM 14656 / S5a33) (Ruminococcus hydrogenotrophicus), this protein is Hydroxypyruvate reductase.